The following is a 348-amino-acid chain: Phenylalanine--tRNA ligase alpha subunit (348 aa).

E259 lines the Mg(2+) pocket.

Belongs to the class-II aminoacyl-tRNA synthetase family. Phe-tRNA synthetase alpha subunit type 1 subfamily. In terms of assembly, tetramer of two alpha and two beta subunits. It depends on Mg(2+) as a cofactor.

It is found in the cytoplasm. The catalysed reaction is tRNA(Phe) + L-phenylalanine + ATP = L-phenylalanyl-tRNA(Phe) + AMP + diphosphate + H(+). This chain is Phenylalanine--tRNA ligase alpha subunit, found in Latilactobacillus sakei subsp. sakei (strain 23K) (Lactobacillus sakei subsp. sakei).